The sequence spans 599 residues: Vitamin B12-dependent ribonucleotide reductase (599 aa).

Position 193–197 (193–197) interacts with substrate; it reads PTGTI. The disordered stretch occupies residues 519-555; it reads LAQSAPRQAGPAKAATTAPAAKAQEPAAAPSPKQAHN. Residues 526–553 show a composition bias toward low complexity; that stretch reads QAGPAKAATTAPAAKAQEPAAAPSPKQA.

This sequence belongs to the ribonucleoside diphosphate reductase class-2 family. Adenosylcob(III)alamin serves as cofactor.

It catalyses the reaction a 2'-deoxyribonucleoside 5'-diphosphate + [thioredoxin]-disulfide + H2O = a ribonucleoside 5'-diphosphate + [thioredoxin]-dithiol. Its function is as follows. Catalyzes the reduction of ribonucleotides to deoxyribonucleotides. May function to provide a pool of deoxyribonucleotide precursors for DNA repair during oxygen limitation and/or for immediate growth after restoration of oxygen. This chain is Vitamin B12-dependent ribonucleotide reductase (nrdJ), found in Streptantibioticus cattleyicolor (Streptomyces cattleya).